Reading from the N-terminus, the 310-residue chain is Carbamate kinase 1 (310 aa).

Belongs to the carbamate kinase family.

It localises to the cytoplasm. It catalyses the reaction hydrogencarbonate + NH4(+) + ATP = carbamoyl phosphate + ADP + H2O + H(+). The protein operates within metabolic intermediate metabolism; carbamoyl phosphate degradation; CO(2) and NH(3) from carbamoyl phosphate: step 1/1. The protein is Carbamate kinase 1 (arcC1) of Staphylococcus epidermidis (strain ATCC 12228 / FDA PCI 1200).